A 352-amino-acid chain; its full sequence is Fe-S cluster assembly protein DRE2 (352 aa).

Polar residues predominate over residues methionine 1 to aspartate 11. The tract at residues methionine 1–alanine 24 is disordered. Positions methionine 1 to leucine 196 are N-terminal SAM-like domain. Residues leucine 196–alanine 237 form a linker region. [2Fe-2S] cluster-binding residues include cysteine 243, cysteine 257, cysteine 260, and cysteine 262. The fe-S binding site A stretch occupies residues cysteine 243–cysteine 262. Positions 315, 318, 326, and 329 each coordinate [4Fe-4S] cluster. 2 short sequence motifs (cx2C motif) span residues cysteine 315–cysteine 318 and cysteine 326–cysteine 329. Positions cysteine 315–cysteine 329 are fe-S binding site B.

The protein belongs to the anamorsin family. As to quaternary structure, monomer. Interacts with TAH18. Interacts with MIA40. The cofactor is [2Fe-2S] cluster. [4Fe-4S] cluster is required as a cofactor.

The protein resides in the cytoplasm. Its subcellular location is the mitochondrion intermembrane space. Functionally, component of the cytosolic iron-sulfur (Fe-S) protein assembly (CIA) machinery required for the maturation of extramitochondrial Fe-S proteins. Part of an electron transfer chain functioning in an early step of cytosolic Fe-S biogenesis, facilitating the de novo assembly of a [4Fe-4S] cluster on the scaffold complex CFD1-NBP35. Electrons are transferred to DRE2 from NADPH via the FAD- and FMN-containing protein TAH18. TAH18-DRE2 are also required for the assembly of the diferric tyrosyl radical cofactor of ribonucleotide reductase (RNR), probably by providing electrons for reduction during radical cofactor maturation in the catalytic small subunit RNR2. The chain is Fe-S cluster assembly protein DRE2 from Coprinopsis cinerea (strain Okayama-7 / 130 / ATCC MYA-4618 / FGSC 9003) (Inky cap fungus).